The following is a 316-amino-acid chain: UDP-N-acetylenolpyruvoylglucosamine reductase (316 aa).

The FAD-binding PCMH-type domain occupies 27-225 (VGGKAERFYR…KTAINALLKK (199 aa)). R190 is a catalytic residue. S239 (proton donor) is an active-site residue. Residue E309 is part of the active site.

This sequence belongs to the MurB family. It depends on FAD as a cofactor.

It localises to the cytoplasm. It catalyses the reaction UDP-N-acetyl-alpha-D-muramate + NADP(+) = UDP-N-acetyl-3-O-(1-carboxyvinyl)-alpha-D-glucosamine + NADPH + H(+). It functions in the pathway cell wall biogenesis; peptidoglycan biosynthesis. Cell wall formation. This Coxiella burnetii (strain RSA 331 / Henzerling II) protein is UDP-N-acetylenolpyruvoylglucosamine reductase.